A 216-amino-acid polypeptide reads, in one-letter code: Fibroblast growth factor 17 (216 aa).

Residues 1 to 22 (MGAARLLPNLTLCLQLLILCCQ) form the signal peptide. N-linked (GlcNAc...) asparagine glycosylation is present at asparagine 137. The disordered stretch occupies residues 190-216 (EKQKQFEFVGSAPTRRTKRTRRPQPLT). Residues 204-216 (RRTKRTRRPQPLT) show a composition bias toward basic residues.

The protein belongs to the heparin-binding growth factors family. As to quaternary structure, interacts with FGFR3 and FGFR4. In terms of tissue distribution, preferentially expressed in the embryonic brain.

Its subcellular location is the secreted. Plays an important role in the regulation of embryonic development and as signaling molecule in the induction and patterning of the embryonic brain. Required for normal brain development. This is Fibroblast growth factor 17 (FGF17) from Homo sapiens (Human).